The sequence spans 348 residues: DNA-directed RNA polymerase subunit alpha (348 aa).

Positions 1 to 243 (MLIKQGDRLI…DQISVFINFD (243 aa)) are alpha N-terminal domain (alpha-NTD). Positions 260 to 348 (VNENLFKGID…WLKRKQQNEA (89 aa)) are alpha C-terminal domain (alpha-CTD).

The protein belongs to the RNA polymerase alpha chain family. In terms of assembly, homodimer. The RNAP catalytic core consists of 2 alpha, 1 beta, 1 beta' and 1 omega subunit. When a sigma factor is associated with the core the holoenzyme is formed, which can initiate transcription.

The catalysed reaction is RNA(n) + a ribonucleoside 5'-triphosphate = RNA(n+1) + diphosphate. In terms of biological role, DNA-dependent RNA polymerase catalyzes the transcription of DNA into RNA using the four ribonucleoside triphosphates as substrates. The polypeptide is DNA-directed RNA polymerase subunit alpha (Oleidesulfovibrio alaskensis (strain ATCC BAA-1058 / DSM 17464 / G20) (Desulfovibrio alaskensis)).